The primary structure comprises 153 residues: Ubiquitin-conjugating enzyme E2 ubc-18 (153 aa).

The 148-residue stretch at 2-149 folds into the UBC core domain; sequence SATRRLQKEL…AEEHTRKHAE (148 aa). Catalysis depends on Cys-86, which acts as the Glycyl thioester intermediate.

It belongs to the ubiquitin-conjugating enzyme family. Interacts with E3 ubiquitin-protein ligase wwp-1. Interacts with RBR-type E3 ubiquitin transferase ari-1.1. Expressed in neurons localized in the head and tail of adults.

The catalysed reaction is S-ubiquitinyl-[E1 ubiquitin-activating enzyme]-L-cysteine + [E2 ubiquitin-conjugating enzyme]-L-cysteine = [E1 ubiquitin-activating enzyme]-L-cysteine + S-ubiquitinyl-[E2 ubiquitin-conjugating enzyme]-L-cysteine.. Functionally, ubiquitin-conjugating enzyme E2. Accepts ubiquitin from the E1 complex and catalyzes its covalent attachment to other proteins. Required for diet restriction-mediated lifespan extension, probably acting as part of a complex with ubiquitin-protein ligase wwp-1. Acts redundantly with lin-35/Rb in the regulation of pharyngeal morphogenesis during embryonic development by negatively regulating the expression of proteins such as sup-35. The sequence is that of Ubiquitin-conjugating enzyme E2 ubc-18 from Caenorhabditis elegans.